We begin with the raw amino-acid sequence, 311 residues long: Small ribosomal subunit biogenesis GTPase RsgA (311 aa).

The CP-type G domain maps to 88–246 (SKEKEQVIVA…VIDTPGIREF (159 aa)). GTP contacts are provided by residues 137–140 (NKID) and 188–196 (GHSGVGKST). Residues C270, C275, H277, and C283 each coordinate Zn(2+).

It belongs to the TRAFAC class YlqF/YawG GTPase family. RsgA subfamily. Monomer. Associates with 30S ribosomal subunit, binds 16S rRNA. Zn(2+) serves as cofactor.

Its subcellular location is the cytoplasm. In terms of biological role, one of several proteins that assist in the late maturation steps of the functional core of the 30S ribosomal subunit. Helps release RbfA from mature subunits. May play a role in the assembly of ribosomal proteins into the subunit. Circularly permuted GTPase that catalyzes slow GTP hydrolysis, GTPase activity is stimulated by the 30S ribosomal subunit. The sequence is that of Small ribosomal subunit biogenesis GTPase RsgA from Chlorobaculum tepidum (strain ATCC 49652 / DSM 12025 / NBRC 103806 / TLS) (Chlorobium tepidum).